The chain runs to 343 residues: S-adenosylmethionine:tRNA ribosyltransferase-isomerase (343 aa).

The protein belongs to the QueA family. Monomer.

It localises to the cytoplasm. The enzyme catalyses 7-aminomethyl-7-carbaguanosine(34) in tRNA + S-adenosyl-L-methionine = epoxyqueuosine(34) in tRNA + adenine + L-methionine + 2 H(+). The protein operates within tRNA modification; tRNA-queuosine biosynthesis. Its function is as follows. Transfers and isomerizes the ribose moiety from AdoMet to the 7-aminomethyl group of 7-deazaguanine (preQ1-tRNA) to give epoxyqueuosine (oQ-tRNA). This is S-adenosylmethionine:tRNA ribosyltransferase-isomerase from Geobacter metallireducens (strain ATCC 53774 / DSM 7210 / GS-15).